Here is a 150-residue protein sequence, read N- to C-terminus: Natriuretic peptides A (150 aa).

The first 24 residues, 1 to 24 (MSSFTITVSFLLVLVFQFPGQTRA), serve as a signal peptide directing secretion. 2 propeptides span residues 25-122 (NPVY…AAPR) and 92-102 (DGGALGRGPWD). The segment at 77 to 100 (LEVPPWTGEVNPAQRDGGALGRGP) is disordered. Phosphoserine is present on Ser128. Cys129 and Cys145 form a disulfide bridge.

This sequence belongs to the natriuretic peptide family. As to quaternary structure, homodimer; disulfide-linked antiparallel dimer. In terms of processing, the precursor molecule is proteolytically cleaved by CORIN at Arg-122 to produce the atrial natriuretic peptide. Undergoes further proteolytic cleavage by unknown proteases to give rise to long-acting natriuretic peptide, vessel dilator and kaliuretic peptide. Additional processing gives rise to the auriculin and atriopeptin peptides. In the kidneys, alternative processing by an unknown protease results in the peptide urodilatin. Cleavage by MME initiates degradation of the factor and thereby regulates its activity. Degradation by IDE results in reduced activation of NPR1 (in vitro). During IDE degradation, the resulting products can temporarily stimulate NPR2 to produce cGMP, before the fragments are completely degraded and inactivated by IDE (in vitro). Post-translationally, degraded by IDE. In terms of processing, phosphorylation on Ser-128 decreases vasorelaxant activity. Brain (at protein level).

It is found in the secreted. The protein localises to the perikaryon. It localises to the cell projection. Its function is as follows. Hormone that plays a key role in mediating cardio-renal homeostasis, and is involved in vascular remodeling and regulating energy metabolism. Acts by specifically binding and stimulating NPR1 to produce cGMP, which in turn activates effector proteins, such as PRKG1, that drive various biological responses. Regulates vasodilation, natriuresis, diuresis and aldosterone synthesis and is therefore essential for regulating blood pressure, controlling the extracellular fluid volume and maintaining the fluid-electrolyte balance. Also involved in inhibiting cardiac remodeling and cardiac hypertrophy by inducing cardiomyocyte apoptosis and attenuating the growth of cardiomyocytes and fibroblasts. Plays a role in female pregnancy by promoting trophoblast invasion and spiral artery remodeling in uterus, and thus prevents pregnancy-induced hypertension. In adipose tissue, acts in various cGMP- and PKG-dependent pathways to regulate lipid metabolism and energy homeostasis. This includes up-regulating lipid metabolism and mitochondrial oxygen utilization by activating the AMP-activated protein kinase (AMPK), and increasing energy expenditure by acting via MAPK11 to promote the UCP1-dependent thermogenesis of brown adipose tissue. Binds the clearance receptor NPR3 which removes the hormone from circulation. Functionally, may have a role in cardio-renal homeostasis through regulation of natriuresis, diuresis, vasodilation, and inhibiting aldosterone synthesis. In vitro, promotes the production of cGMP and induces vasodilation. May promote natriuresis, at least in part, by enhancing prostaglandin E2 synthesis resulting in the inhibition of renal Na+-K+-ATPase. However reports on the involvement of this peptide in mammal blood volume and blood pressure homeostasis are conflicting; according to a report, in vivo it is not sufficient to activate cGMP and does not inhibit collecting duct transport nor effect diuresis and natriuresis. Appears to bind to specific receptors that are distinct from the receptors bound by atrial natriuretic peptide and vessel dilator. Possibly enhances protein excretion in urine by decreasing proximal tubular protein reabsorption. May have a role in cardio-renal homeostasis through regulation of natriuresis, diuresis, and vasodilation. In vitro, promotes the production of cGMP and induces vasodilation. May promote natriuresis, at least in part, by enhancing prostaglandin E2 synthesis resulting in the inhibition of renal Na+-K+-ATPase. However reports on the involvement of this peptide in mammal blood volume and blood pressure homeostasis are conflicting; according to a report it is not sufficient to activate cGMP and does not inhibit collecting duct transport nor effect diuresis and natriuresis. Appears to bind to specific receptors that are distinct from the receptors bound by the atrial natriuretic and long-acting natriuretic peptides. Possibly functions in protein excretion in urine by maintaining the integrity of the proximal tubules and enhancing protein excretion by decreasing proximal tubular protein reabsorption. In terms of biological role, may have a role in cardio-renal homeostasis through regulation of diuresis and inhibiting aldosterone synthesis. In vitro, promotes the production of cGMP and induces vasodilation. May promote natriuresis, at least in part, by enhancing prostaglandin E2 synthesis resulting in the inhibition of renal Na+-K+-ATPase. May have a role in potassium excretion but not sodium excretion (natriuresis). Possibly enhances protein excretion in urine by decreasing proximal tubular protein reabsorption. Its function is as follows. Hormone produced in the kidneys that appears to be important for maintaining cardio-renal homeostasis. Mediates vasodilation, natriuresis and diuresis primarily in the renal system, in order to maintain the extracellular fluid volume and control the fluid-electrolyte balance. Specifically binds and stimulates cGMP production by renal transmembrane receptors, likely NPR1. Urodilatin not ANP, may be the natriuretic peptide responsible for the regulation of sodium and water homeostasis in the kidney. Functionally, may have a role in cardio-renal homeostasis through regulation of natriuresis and vasodilation. In vivo promotes natriuresis and in vitro, vasodilates renal artery strips. May have a role in cardio-renal homeostasis through regulation of regulation of natriuresis and vasodilation. In vivo promotes natriuresis. In vitro, vasodilates intestinal smooth muscle but not smooth muscle strips. In terms of biological role, may have a role in cardio-renal homeostasis through regulation of natriuresis and vasodilation. In vivo promotes natriuresis. In vitro, selectively vasodilates intestinal and vascular smooth muscle strips. Its function is as follows. May have a role in cardio-renal homeostasis through regulation of natriuresis and vasodilation. In vivo promotes natriuresis. In vitro, selectively vasodilates intestinal smooth muscle but not vascular smooth muscle strips. This chain is Natriuretic peptides A (NPPA), found in Sus scrofa (Pig).